Here is a 430-residue protein sequence, read N- to C-terminus: Replication protein A 32 kDa subunit C (430 aa).

The disordered stretch occupies residues 14-46; that stretch reads MPSQRSGAPAPEYSAAGTGAAAAPSPSKPRDPR. Residues 23–38 are compositionally biased toward low complexity; that stretch reads APEYSAAGTGAAAAPS. The OB DNA-binding region spans 86–160; it reads VRVLGRVVSV…QGLARSIRPI (75 aa).

The protein belongs to the replication factor A protein 2 family. As to quaternary structure, heterotrimer of RPA1, RPA2 and RPA3 (canonical replication protein A complex). Interacts with RPA1C and RPA3. Post-translationally, phosphorylated in a cell-cycle-dependent manner (from the S phase until mitosis). In response to DNA damage, recruited to DNA-repair nuclear foci, as a hypophosphorylated form.

It is found in the nucleus. Its function is as follows. Component of the replication protein A complex (RPA) required for DNA recombination, repair and replication. The activity of RPA is mediated by single-stranded DNA binding and protein interactions. The chain is Replication protein A 32 kDa subunit C (RPA2C) from Oryza sativa subsp. japonica (Rice).